A 231-amino-acid chain; its full sequence is MNKQRGTFSEVSLAQDPKRQQRKPKGNKSSISGTEQEIFQVELNLQNPSLNHQGIDKIYDCQGLLPPPEKLTAEVLGIICIVLMATVLKTIVLIPFLEQNNFSPNTRTQKARHCGHCPEEWITYSNSCYYIGKERRTWEESLLACTSKNSSLLSIDNEEEMKFLASILPSSWIGVFRNSSHHPWVTINGLAFKHKIKDSDNAELNCAVLQVNRLKSAQCGSSMIYHCKHKL.

Polar residues predominate over residues methionine 1–serine 12. The interval methionine 1–serine 32 is disordered. Residues methionine 1–lysine 70 are Cytoplasmic-facing. A helical; Signal-anchor for type II membrane protein transmembrane segment spans residues leucine 71–leucine 93. The Extracellular portion of the chain corresponds to isoleucine 94–leucine 231. Asparagine 100 carries an N-linked (GlcNAc...) asparagine glycan. Residues histidine 116 to histidine 229 form the C-type lectin domain. 3 cysteine pairs are disulfide-bonded: cysteine 117/cysteine 128, cysteine 145/cysteine 227, and cysteine 206/cysteine 219. Asparagine 149 and asparagine 178 each carry an N-linked (GlcNAc...) asparagine glycan.

In terms of assembly, heterodimer with KLRD1; disulfide-linked. KLRD1-KLRC2 receptor complex interacts with TYROBP homodimer; this interaction is necessary for the expression on the cell surface. KLRD1-KLRC2 receptor complex can bind with low affinity to HLA-E loaded with self-peptides derived from the signal sequence of classical MHC class Ia. Expressed in NK cell subsets, in particular in adaptive CD57-positive NK cells (at protein level). Expressed in terminally differentiated cytotoxic gamma-delta T cells (at protein level). Expressed in alpha-beta T cells subsets (at protein level). KLRD1-KLRC1 and KLRD1-KLRC2 are differentially expressed within NK and T cell populations, with only minor subsets expressing both receptor complexes (at protein level).

It localises to the cell membrane. In terms of biological role, immune activating receptor involved in self-nonself discrimination. In complex with KLRD1 on cytotoxic lymphocyte subsets, recognizes non-classical major histocompatibility (MHC) class Ib HLA-E loaded with signal sequence-derived peptides from non-classical MHC class Ib HLA-G molecules, likely playing a role in the generation and effector functions of adaptive natural killer (NK) cells and in maternal-fetal tolerance during pregnancy. Regulates the effector functions of terminally differentiated cytotoxic lymphocyte subsets, and in particular may play a role in adaptive NK cell response to viral infection. Upon HLA-E-peptide binding, transmits intracellular signals via the adapter protein TYROBP/DAP12, triggering the phosphorylation of proximal signaling molecules and cell activation. This Homo sapiens (Human) protein is NKG2-C type II integral membrane protein (KLRC2).